Here is a 53-residue protein sequence, read N- to C-terminus: uncharacterized protein (53 aa).

The next 2 helical transmembrane spans lie at 3–22 (LFGM…GVLL) and 26–45 (AFFF…FTVL).

Its subcellular location is the cell membrane. This is an uncharacterized protein from Bacillus subtilis (strain 168).